The following is a 178-amino-acid chain: Bryoporin (178 aa).

Phosphocholine is bound by residues Ser-51, Val-83, Ser-102, Pro-104, and Tyr-134. A trp-rich region region spans residues Trp-101 to Ala-117.

The protein belongs to the actinoporin family. Plant subfamily.

Inhibited by sphingomyelin. Functionally, actinoporin-related protein having hemolytic activity in vitro. Binds probably a phosphocholine derivative with the unique amido or hydroxyl groups found in sphingomyelin. Involved in drought tolerance. This is Bryoporin from Physcomitrium patens (Spreading-leaved earth moss).